A 279-amino-acid polypeptide reads, in one-letter code: Dermonecrotic toxin LspiSicTox-betaIE3ii (279 aa).

His-5 is an active-site residue. The Mg(2+) site is built by Glu-25 and Asp-27. His-41 serves as the catalytic Nucleophile. 2 cysteine pairs are disulfide-bonded: Cys-45–Cys-51 and Cys-47–Cys-190. Asp-85 is a binding site for Mg(2+).

This sequence belongs to the arthropod phospholipase D family. Class II subfamily. It depends on Mg(2+) as a cofactor. Expressed by the venom gland.

It localises to the secreted. It carries out the reaction an N-(acyl)-sphingosylphosphocholine = an N-(acyl)-sphingosyl-1,3-cyclic phosphate + choline. The catalysed reaction is an N-(acyl)-sphingosylphosphoethanolamine = an N-(acyl)-sphingosyl-1,3-cyclic phosphate + ethanolamine. It catalyses the reaction a 1-acyl-sn-glycero-3-phosphocholine = a 1-acyl-sn-glycero-2,3-cyclic phosphate + choline. The enzyme catalyses a 1-acyl-sn-glycero-3-phosphoethanolamine = a 1-acyl-sn-glycero-2,3-cyclic phosphate + ethanolamine. Functionally, dermonecrotic toxins cleave the phosphodiester linkage between the phosphate and headgroup of certain phospholipids (sphingolipid and lysolipid substrates), forming an alcohol (often choline) and a cyclic phosphate. This toxin acts on sphingomyelin (SM). It may also act on ceramide phosphoethanolamine (CPE), lysophosphatidylcholine (LPC) and lysophosphatidylethanolamine (LPE), but not on lysophosphatidylserine (LPS), and lysophosphatidylglycerol (LPG). It acts by transphosphatidylation, releasing exclusively cyclic phosphate products as second products. Induces dermonecrosis, hemolysis, increased vascular permeability, edema, inflammatory response, and platelet aggregation. This is Dermonecrotic toxin LspiSicTox-betaIE3ii from Loxosceles spinulosa (Recluse spider).